A 329-amino-acid polypeptide reads, in one-letter code: Small ribosomal subunit protein uS2 (329 aa).

The protein belongs to the universal ribosomal protein uS2 family.

This is Small ribosomal subunit protein uS2 from Bradyrhizobium sp. (strain ORS 278).